We begin with the raw amino-acid sequence, 304 residues long: Putative S-adenosyl-L-methionine-dependent methyltransferase Mjls_1071 (304 aa).

S-adenosyl-L-methionine contacts are provided by residues Asp130 and 159–160 (DL).

The protein belongs to the UPF0677 family.

Its function is as follows. Exhibits S-adenosyl-L-methionine-dependent methyltransferase activity. The polypeptide is Putative S-adenosyl-L-methionine-dependent methyltransferase Mjls_1071 (Mycobacterium sp. (strain JLS)).